Reading from the N-terminus, the 434-residue chain is Nicotinate phosphoribosyltransferase (434 aa).

At His-242 the chain carries Phosphohistidine; by autocatalysis.

Belongs to the NAPRTase family. Post-translationally, transiently phosphorylated on a His residue during the reaction cycle. Phosphorylation strongly increases the affinity for substrates and increases the rate of nicotinate D-ribonucleotide production. Dephosphorylation regenerates the low-affinity form of the enzyme, leading to product release.

It carries out the reaction nicotinate + 5-phospho-alpha-D-ribose 1-diphosphate + ATP + H2O = nicotinate beta-D-ribonucleotide + ADP + phosphate + diphosphate. Its pathway is cofactor biosynthesis; NAD(+) biosynthesis; nicotinate D-ribonucleotide from nicotinate: step 1/1. Its function is as follows. Catalyzes the synthesis of beta-nicotinate D-ribonucleotide from nicotinate and 5-phospho-D-ribose 1-phosphate at the expense of ATP. The chain is Nicotinate phosphoribosyltransferase from Rhizobium rhizogenes (strain K84 / ATCC BAA-868) (Agrobacterium radiobacter).